A 158-amino-acid chain; its full sequence is Large ribosomal subunit protein uL16 (158 aa).

It belongs to the universal ribosomal protein uL16 family. Part of the 50S ribosomal subunit.

Its function is as follows. Binds 23S rRNA and is also seen to make contacts with the A and possibly P site tRNAs. This chain is Large ribosomal subunit protein uL16, found in Synechococcus sp. (strain CC9902).